The following is a 270-amino-acid chain: Phosphatidylglycerol--prolipoprotein diacylglyceryl transferase (270 aa).

3 helical membrane passes run 17-37 (LAIH…MFLG), 63-83 (ILFL…CLFY), and 95-115 (IFYI…VIAS). Arg146 lines the a 1,2-diacyl-sn-glycero-3-phospho-(1'-sn-glycerol) pocket. 3 helical membrane passes run 182-202 (SQVY…WLYA), 209-229 (GEVA…AEYF), and 243-263 (MSMG…LWVW).

This sequence belongs to the Lgt family.

The protein localises to the cell inner membrane. It catalyses the reaction L-cysteinyl-[prolipoprotein] + a 1,2-diacyl-sn-glycero-3-phospho-(1'-sn-glycerol) = an S-1,2-diacyl-sn-glyceryl-L-cysteinyl-[prolipoprotein] + sn-glycerol 1-phosphate + H(+). The protein operates within protein modification; lipoprotein biosynthesis (diacylglyceryl transfer). In terms of biological role, catalyzes the transfer of the diacylglyceryl group from phosphatidylglycerol to the sulfhydryl group of the N-terminal cysteine of a prolipoprotein, the first step in the formation of mature lipoproteins. The polypeptide is Phosphatidylglycerol--prolipoprotein diacylglyceryl transferase (Paracidovorax citrulli (strain AAC00-1) (Acidovorax citrulli)).